Reading from the N-terminus, the 101-residue chain is MLKVEKFKKLKRFEVYYCLKNSFLEEVDIEMKYSCSITTIMSNGSASLLMNWEELTPGHCFTSYTTNPIAGDYGLNASAIDGHTEELVATHPAGTLENATQ.

This is an uncharacterized protein from Saccharomyces cerevisiae (strain ATCC 204508 / S288c) (Baker's yeast).